A 1872-amino-acid chain; its full sequence is MAQHLPPVGGNGGAHTQPSLPALPAHLQSDTHLTGHLASRFHVSLPTAKLSSHAFISINTYTSSSKGQDGGKAGSAQGEAEDMADRAFLRLGHRSENQAILFLGESGSGKTTIRSHILTALLNKTSTPLSTKVSLAAYVFDTLTTTKTATTPTASKAGLFYELQYDTASTTSPLLIGGKLLDHRLERSRITDVPTGERNFHILYYILAGTSAAEKTHLGFGEPDAGTGSKRWRYLGHPTQLKVGINDAQGFQLFKTALRKLEFPRSEIAEICQVLASILHIGQLEFESSENTTVAGDESGGFSHEGGQITTVAKNKDVLAIVAAFLGVSAAELQTTLGYKTKIIHKERVTVMLDPAGARANANELARTLYSLLVAYVIENINQKICAPEEAIVNTVSIIDFPGFSQQSSTGSSLDLLLNNAAAEAMYNLTLQNFFDRKADLLETEEVSVPPTSYFDNSDAVKGLLKTGNGLLSILDDQTRRHRTDMQLLESLRKRFEGKNPAIGVSAATAKLPGSNFLSENTAASFTVRHFAGEVEYSIKGLVEENGEVISGDLLNLVNSTKSDFIARLFGQEALHTVTHPQERTTVMQASVSSKPMRAPSVMSRKIRPGTARTTRQRKESISGRQDTLDDIASEAGDSRRPVNKPSEEGASGQFLHSLDNVTKSFHAQNTNAYFVFCLKPNDRRIANQFDSKCVRTQMQTFGIAEISQRIRSADFSVFLPFGEFLGLADVDTLLVGSEREKVEAVVDEKRWPTNEIQIGSTGVFISERCWMEIAQLSDMVTGRFGVPESEGGTPLANMPYGASKERLIAAGNSPYNNDKAKSGYFGSNDIDGRSDAGVSAFGGGDMFKNLDTREQMAERGNEKSMVEVEEFKDSPSRKRWVFITWMLTFFVPEFLIQHLGKMPRKDVRMAWREKLAINFIIWFSCLAAAFILVVFPMLVCPTQYVFTGEELSAYNGKDGKASYAAIRGQVFDIGSFIPRHPLPYLPSKLFTQYAGTDITGLFPVQVSALCQGTTGSVNPAVLLDYKDTNITDSPNVFNSQDLNSRYHDFRYFTNDTRPDWFSQMMITFRGTYKKGNIGYPAQVVQKMAQQRNAIAILNGRVYDFTKYIAGGRDFRVKYNETRPTDQSLLDFMDPSVVRLFSDRSGEDVTPLWDALRLDPTLRKSMQLCLDNLFYLGDVDTRNSVRCNFAKYFILAVTIILCSIIAFKFLAALQFGTKNMPENLDKFIMCQIPAYTEDEESLRRAIDSAARMRYDDKRKLLIVVCDGMIIGQGNDRPTPRIVLDILGVSETVDPEPLSFESLGEGLKQHNMGKVYSGLYEVQGHIVPFLVVVKVGKPSEVSRPGNRGKRDSQMVIMRFLNRVHYNLAMSPLELEMYHQIRNIIGVNPTFYEYMLQIDADTVVAADSATRFVSAFLDDTRLIACCGETSIANAKSSFITMIQVYEYYISHNLSKAFESLFGSVTCLPGCFSMYRIRAAETGKPLFVSREVVDAYATIRVDTLHMKNLLHLGEDRYLTTLLLKYHNKYKTKYIYRAHAWTIAPDSWKVFLSQRRRWINSTVHNLIELIPMGQLCGFCCFSMRFIVFIDLLSTIIQPVTIAYIVYLIVRMVLTPDLVPVLAFVLLAAVYGLQAIIFILRRKWEMIAWMILYIIAMPIFSFGLPLYAFWHMDDFTWGNTRVVTGEKGKKVVVTDEGKFDPSSIPRKKWEEYQSELWDAQTSKDDTRSEASGFSYATKAPVAVSEYGFPVNPYGAYPPSRPGSTTGIPHMPHMPYSASRMSLAHSEMLMAGNRQSQFGGSQFNLPQSGSEMELSNLAGLPSDDALLAEIREILRTADLMTVTKKGVKQELERRFGVNLDSRRAYINSATEALLSGQL.

Residues 1-23 (MAQHLPPVGGNGGAHTQPSLPAL) form a disordered region. One can recognise a Myosin motor domain in the interval 1–779 (MAQHLPPVGG…CWMEIAQLSD (779 aa)). Residue 104–111 (GESGSGKT) coordinates ATP. Residues Asn-123, Asn-291, Asn-428, and Asn-559 are each glycosylated (N-linked (GlcNAc...) asparagine). The segment at 587–652 (VMQASVSSKP…VNKPSEEGAS (66 aa)) is disordered. Residues 659 to 683 (LDNVTKSFHAQNTNAYFVFCLKPND) are actin-binding. The N-linked (GlcNAc...) asparagine glycan is linked to Asn-661. 2 helical membrane-spanning segments follow: residues 881-901 (WVFI…QHLG) and 920-940 (FIIW…PMLV). The Cytochrome b5 heme-binding domain occupies 944-1003 (QYVFTGEELSAYNGKDGKASYAAIRGQVFDIGSFIPRHPLPYLPSKLFTQYAGTDITGLF). Residues Asn-1030, Asn-1055, and Asn-1120 are each glycosylated (N-linked (GlcNAc...) asparagine). Residues 1193 to 1213 (FILAVTIILCSIIAFKFLAAL) form a helical membrane-spanning segment. 2 N-linked (GlcNAc...) asparagine glycosylation sites follow: Asn-1450 and Asn-1556. The next 3 helical transmembrane spans lie at 1581–1601 (FIVF…AYIV), 1614–1634 (VPVL…IIFI), and 1641–1661 (MIAW…GLPL). The 56-residue stretch at 1814–1869 (LPSDDALLAEIREILRTADLMTVTKKGVKQELERRFGVNLDSRRAYINSATEALLS) folds into the DEK-C domain.

It belongs to the chitin synthase family. Class V subfamily.

It localises to the cell membrane. The enzyme catalyses [(1-&gt;4)-N-acetyl-beta-D-glucosaminyl](n) + UDP-N-acetyl-alpha-D-glucosamine = [(1-&gt;4)-N-acetyl-beta-D-glucosaminyl](n+1) + UDP + H(+). In terms of biological role, polymerizes chitin, a structural polymer of the cell wall and septum, by transferring the sugar moiety of UDP-GlcNAc to the non-reducing end of the growing chitin polymer. Required for appressorium penetration and invasive growth. In Pyricularia oryzae (strain 70-15 / ATCC MYA-4617 / FGSC 8958) (Rice blast fungus), this protein is Chitin synthase 6.